We begin with the raw amino-acid sequence, 473 residues long: UDP-N-acetylmuramate--L-alanine ligase (473 aa).

An ATP-binding site is contributed by 123 to 129 (GSHGKTS).

This sequence belongs to the MurCDEF family.

It is found in the cytoplasm. The catalysed reaction is UDP-N-acetyl-alpha-D-muramate + L-alanine + ATP = UDP-N-acetyl-alpha-D-muramoyl-L-alanine + ADP + phosphate + H(+). Its pathway is cell wall biogenesis; peptidoglycan biosynthesis. Cell wall formation. This is UDP-N-acetylmuramate--L-alanine ligase from Prochlorococcus marinus subsp. pastoris (strain CCMP1986 / NIES-2087 / MED4).